Consider the following 381-residue polypeptide: Adaptive-response sensory kinase SasA (381 aa).

The 214-residue stretch at 154-367 (MVAHELRTPL…CFYFTVPVWD (214 aa)) folds into the Histidine kinase domain. Phosphohistidine; by autocatalysis is present on histidine 157.

Homooligomerizes. Interacts with KaiC. Participates in the KaiBC complex, whose core is composed of a KaiC homohexamer and 6 KaiB.

The enzyme catalyses ATP + protein L-histidine = ADP + protein N-phospho-L-histidine.. Member of the two-component regulatory system SasA/RpaA involved in genome-wide circadian gene expression. One of several clock output pathways. Participates in the Kai clock protein complex, the main circadian regulator in cyanobacteria, via its interaction with KaiC. KaiC enhances the autophosphorylation activity of SasA, which then transfers its phosphate group to RpaA to activate it. In addition to its output function, recruits fold-shifted KaiB (KaiB(fs)) to KaiC to cooperatively form the KaiB(6):KaiC(6) complex (independent of SasA kinase activity). Required for robustness of the circadian rhythm of gene expression and is involved in clock output, also required for adaptation to light/dark cycles. This Prochlorococcus marinus (strain SARG / CCMP1375 / SS120) protein is Adaptive-response sensory kinase SasA.